The chain runs to 202 residues: Histone chaperone ASF1B (202 aa).

The tract at residues 1–156 is interaction with histone H3 and CHAF1B; the sequence is MAKVSVLNVA…TRFHINWDNN (156 aa). A Phosphoserine; by TLK2 modification is found at Ser198.

Belongs to the ASF1 family. As to quaternary structure, interacts with histone H3 (via C-terminus), including histone H3.1, H3.2 and H3.3, and histone H4; the interaction with H3 is direct. Interacts with the CHAF1A, CHAF1B and RBBP4 subunits of the CAF-1 complex. Interacts with HAT1, NASP and TAF1. Found in a soluble complex with NASP and histones H3 and H4; the interaction with NASP is probably indirect and mediated by H3-H4. Interacts with CDAN1. Found in a cytosolic complex with CDAN1, ASF1A, IPO4 and histones H3.1 and H4. Interacts with CREBBP. Post-translationally, phosphorylated by TLK2. Phosphorylated by TLK1. In terms of tissue distribution, highly expressed in germ cells. Restricted to premeiotic to meiotic stages during spermatogenesis.

It is found in the nucleus. The protein localises to the cytoplasm. It localises to the cytosol. Its function is as follows. Histone chaperone that facilitates histone deposition and histone exchange and removal during nucleosome assembly and disassembly. Cooperates with chromatin assembly factor 1 (CAF-1) to promote replication-dependent chromatin assembly. Also involved in the nuclear import of the histone H3-H4 dimer together with importin-4 (IPO4): specifically recognizes and binds newly synthesized histones with the monomethylation of H3 'Lys-9' (H3K9me1) and diacetylation at 'Lys-5' and 'Lys-12' of H4 (H4K5ac and H4K12ac) marks in the cytosol. Does not participate in replication-independent nucleosome deposition which is mediated by ASF1A and HIRA. Required for gonad development. The sequence is that of Histone chaperone ASF1B from Mus musculus (Mouse).